A 348-amino-acid chain; its full sequence is Rhodopsin (348 aa).

Position 1 is an N-acetylmethionine (methionine 1). The Extracellular portion of the chain corresponds to 1 to 36; it reads MNGTEGPNFYVPFSNKTGVVRSPFEAPQYYLAEPWQ. Asparagine 2 and asparagine 15 each carry an N-linked (GlcNAc...) asparagine glycan. Residues 37–61 form a helical membrane-spanning segment; it reads FSMLAAYMFLLIVLGFPINFLTLYV. At 62–73 the chain is on the cytoplasmic side; the sequence is TVQHKKLRTPLN. Residues 74–96 traverse the membrane as a helical segment; sequence YILLNLAVADLFMVFGGFTTTLY. At 97-110 the chain is on the extracellular side; sequence TSLHGYFVFGPTGC. Residues cysteine 110 and cysteine 187 are joined by a disulfide bond. The chain crosses the membrane as a helical span at residues 111–133; the sequence is NLEGFFATLGGEIALWSLVVLAI. A 'Ionic lock' involved in activated form stabilization motif is present at residues 134 to 136; sequence ERY. Topologically, residues 134 to 152 are cytoplasmic; that stretch reads ERYVVVCKPMSNFRFGENH. The helical transmembrane segment at 153–173 threads the bilayer; sequence AIMGVAFTWVMALACAAPPLV. The Extracellular segment spans residues 174–202; that stretch reads GWSRYIPQGMQCSCGALYFTLKPEINNES. Glutamate 201 is a binding site for Zn(2+). Residues 203–224 form a helical membrane-spanning segment; the sequence is FVIYMFVVHFSIPLIVIFFCYG. At 225 to 252 the chain is on the cytoplasmic side; the sequence is QLVFTVKEAAAQQQESATTQKAEKEVTR. A helical transmembrane segment spans residues 253 to 274; sequence MVIIMVIAFLICWLPYAGVAFY. Residues 275-286 lie on the Extracellular side of the membrane; the sequence is IFTHQGSDFGPI. Glutamine 279 is a binding site for Zn(2+). A helical transmembrane segment spans residues 287 to 308; that stretch reads FMTIPAFFAKSSSVYNPVIYIM. Lysine 296 is subject to N6-(retinylidene)lysine. Topologically, residues 309–348 are cytoplasmic; it reads MNKQFRNCMLTTLCCGKNPLGDDEASTTVSKTETSQVAPA. 2 S-palmitoyl cysteine lipidation sites follow: cysteine 322 and cysteine 323. The segment at 330–348 is interaction with SAG; the sequence is DDEASTTVSKTETSQVAPA. Position 334 is a phosphoserine (serine 334). Serine 334 carries the post-translational modification Phosphoserine; by RK and GRK7. Phosphothreonine occurs at positions 335 and 336. 2 positions are modified to phosphothreonine; by RK and GRK7: threonine 335 and threonine 336. Position 338 is a phosphoserine; by RK and GRK7 (serine 338). Threonine 340 and threonine 342 each carry phosphothreonine. A Phosphoserine; by RK and GRK7 modification is found at serine 343.

It belongs to the G-protein coupled receptor 1 family. Opsin subfamily. As to quaternary structure, homodimer. May form a complex composed of RHO, GRK1 and RCVRN in a Ca(2+)-dependent manner; RCVRN prevents the interaction between GRK1 and RHO. Interacts with GRK1. Interacts (phosphorylated form) with SAG. Interacts with GNAT1. Interacts with GNAT3. SAG and G-proteins compete for a common binding site. Interacts with PRCD; the interaction promotes PRCD stability. Forms a complex with ASAP1 and ARF4. Forms a complex with ASAP1, RAB11A, Rabin8/RAB3IP, ARF4 and RAB11FIP3; the complex regulates Golgi-to-cilia rhodopsin/RHO transport in photoreceptors. Post-translationally, phosphorylated on some or all of the serine and threonine residues present in the C-terminal region. Contains one covalently linked retinal chromophore. Upon light absorption, the covalently bound 11-cis-retinal is converted to all-trans-retinal. After hydrolysis of the Schiff base and release of the covalently bound all-trans-retinal, active rhodopsin is regenerated by binding of a fresh molecule of 11-cis-retinal.

Its subcellular location is the membrane. It localises to the cell projection. The protein resides in the cilium. It is found in the photoreceptor outer segment. Its function is as follows. Photoreceptor required for image-forming vision at low light intensity. Required for photoreceptor cell viability after birth. Light-induced isomerization of 11-cis to all-trans retinal triggers a conformational change that activates signaling via G-proteins. Subsequent receptor phosphorylation mediates displacement of the bound G-protein alpha subunit by the arrestin SAG and terminates signaling. This is Rhodopsin (RHO) from Ovis aries (Sheep).